The following is a 315-amino-acid chain: MASTSRLDNNKVCCYAHPESPLIEDYRAGDMICSECGLVVGDRVIDVGSEWRTFSNEKSGVDPSRVGGPENPLLSGGDLSTIIGPGTGSASFDAFGAPKYQNRRTMSSSDRSLISAFKEISSMADRINLPKTIVDRANNLFKQVHDGKNLKGRSNDAKASACLYIACRQEGVPRTFKEICAVSKISKKEIGRCFKLTLKALETSVDLITTADFMCRFCANLDLPNMVQRAATHIAKKAVEMDIVPGRSPISVAAAAIYMASQASEHKRSQKEIGDIAGVADVTIRQSYKLMYPHAAKLFPEDFKFTTPIDQLPQM.

The segment at 10 to 41 adopts a TFIIB-type zinc-finger fold; it reads NKVCCYAHPESPLIEDYRAGDMICSECGLVVG. Zn(2+)-binding residues include Cys-14, His-17, Cys-33, and Cys-36. 2 tandem repeats follow at residues 123-199 and 217-293.

It belongs to the TFIIB family. As to quaternary structure, belongs to the TFIID complex which is composed of TATA binding protein (Tbp) and a number of TBP-associated factors (Tafs). Associates with TFIID-IIA (DA complex) to form TFIID-IIA-IIB (DAB-complex) which is then recognized by polymerase II.

The protein resides in the nucleus. General factor that plays a major role in the activation of eukaryotic genes transcribed by RNA polymerase II. This chain is Transcription initiation factor IIB (TfIIB), found in Drosophila melanogaster (Fruit fly).